We begin with the raw amino-acid sequence, 234 residues long: Large ribosomal subunit protein uL1 (234 aa).

Belongs to the universal ribosomal protein uL1 family. As to quaternary structure, part of the 50S ribosomal subunit.

Binds directly to 23S rRNA. The L1 stalk is quite mobile in the ribosome, and is involved in E site tRNA release. Its function is as follows. Protein L1 is also a translational repressor protein, it controls the translation of the L11 operon by binding to its mRNA. The polypeptide is Large ribosomal subunit protein uL1 (Erwinia tasmaniensis (strain DSM 17950 / CFBP 7177 / CIP 109463 / NCPPB 4357 / Et1/99)).